The following is a 354-amino-acid chain: MDMMLLVQGACCSNQWLAAVLLSLCCLLPSCLPAGQSVDFPWAAVDNMMVRKGDTAVLRCYLEDGASKGAWLNRSSIIFAGGDKWSVDPRVSISTLNKRDYSLQIQNVDVTDDGPYTCSVQTQHTPRTMQVHLTVQVPPKIYDISSDMTINEGTNVTLTCLATGKPEPSISWRHISPSAKPFENGQYLDIYGITRDQAGEYECSAENDVSFPDVRKVKVVVNFAPTIQEIKSGTMTPGRSGLIRCEGAGVPPPAFEWYKGEKKLFNGQQGIIIQNFSTRSILTVTNVTQEHFGNYTCVAANKLGTTNASLPLNPPSTAQYGITGSADVLFSCWYLVLTLSSFTSIFYLKNAILQ.

The first 37 residues, 1 to 37 (MDMMLLVQGACCSNQWLAAVLLSLCCLLPSCLPAGQS), serve as a signal peptide directing secretion. Ig-like C2-type domains follow at residues 38–134 (VDFP…VHLT), 139–221 (PKIY…KVVV), and 225–313 (PTIQ…LPLN). The cysteines at positions 60 and 118 are disulfide-linked. Residues N73 and N155 are each glycosylated (N-linked (GlcNAc...) asparagine). 2 cysteine pairs are disulfide-bonded: C160–C203 and C245–C297. Y187 carries the post-translational modification Phosphotyrosine. N-linked (GlcNAc...) asparagine glycans are attached at residues N275, N286, N294, and N307. G324 carries GPI-anchor amidated glycine lipidation. Residues 325-354 (SADVLFSCWYLVLTLSSFTSIFYLKNAILQ) constitute a propeptide, removed in mature form.

This sequence belongs to the immunoglobulin superfamily. IgLON family.

Its subcellular location is the cell membrane. May be involved in cell-adhesion. May function as a trans-neural growth-promoting factor in regenerative axon sprouting in the mammalian brain. This chain is Neuronal growth regulator 1 (NEGR1), found in Pongo abelii (Sumatran orangutan).